We begin with the raw amino-acid sequence, 126 residues long: Profilin-3 (126 aa).

Belongs to the profilin family. As to quaternary structure, occurs in many kinds of cells as a complex with monomeric actin in a 1:1 ratio.

The protein localises to the cytoplasm. The protein resides in the cytoskeleton. In terms of biological role, binds to actin and affects the structure of the cytoskeleton. At high concentrations, profilin prevents the polymerization of actin, whereas it enhances it at low concentrations. By binding to PIP2, it inhibits the formation of IP3 and DG. This Dictyostelium discoideum (Social amoeba) protein is Profilin-3 (proC).